The following is a 192-amino-acid chain: Ion-translocating oxidoreductase complex subunit A (192 aa).

The next 6 helical transmembrane spans lie at 5-25, 39-59, 63-83, 102-122, 134-154, and 171-191; these read ILLI…FLGL, VGMG…AYLV, ILIP…VIAV, LLGI…VALL, VVYG…FAAL, and AIAL…TGLV.

Belongs to the NqrDE/RnfAE family. In terms of assembly, the complex is composed of six subunits: RnfA, RnfB, RnfC, RnfD, RnfE and RnfG.

It is found in the cell inner membrane. In terms of biological role, part of a membrane-bound complex that couples electron transfer with translocation of ions across the membrane. In Haemophilus influenzae (strain 86-028NP), this protein is Ion-translocating oxidoreductase complex subunit A.